The sequence spans 395 residues: Beta-1,4-galactosyltransferase 3 (395 aa).

Residues 1–10 lie on the Cytoplasmic side of the membrane; that stretch reads MLRRLLERPC. Residues 11-31 form a helical; Signal-anchor for type II membrane protein membrane-spanning segment; the sequence is TLALLVGSQLAVMMYLSLGGF. Residues 32-395 lie on the Lumenal side of the membrane; the sequence is RSLSALFGRD…ANHTAPRGSH (364 aa). N-linked (GlcNAc...) asparagine glycosylation is present at Asn57. A disulfide bridge connects residues Cys79 and Cys121. 132 to 136 contributes to the UDP-alpha-D-galactose binding site; that stretch reads PHRAR. The N-linked (GlcNAc...) asparagine glycan is linked to Asn168. UDP-alpha-D-galactose contacts are provided by residues 171–173, 198–199, Tyr228, and Trp260; these read FNR and VD. A disulfide bridge links Cys192 with Cys211. Asp199 provides a ligand contact to Mn(2+). 262 to 265 is a binding site for N-acetyl-D-glucosamine; it reads GEDD. His293 serves as a coordination point for Mn(2+). 293 to 295 provides a ligand contact to UDP-alpha-D-galactose; the sequence is HRG. Arg305 contacts N-acetyl-D-glucosamine. Residue Asn339 is glycosylated (N-linked (GlcNAc...) asparagine). Residues 340–395 are disordered; that stretch reads ITADIGTDPRGPRSPSGPRYPPGSSQAFRQEMLQRRPPARPGPLPTANHTAPRGSH. The span at 352-364 shows a compositional bias: low complexity; the sequence is RSPSGPRYPPGSS. Asn387 is a glycosylation site (N-linked (GlcNAc...) asparagine).

Belongs to the glycosyltransferase 7 family. Requires Mn(2+) as cofactor.

It localises to the golgi apparatus. Its subcellular location is the golgi stack membrane. It carries out the reaction an N-acetyl-beta-D-glucosaminyl derivative + UDP-alpha-D-galactose = a beta-D-galactosyl-(1-&gt;4)-N-acetyl-beta-D-glucosaminyl derivative + UDP + H(+). The catalysed reaction is N-acetyl-D-glucosamine + UDP-alpha-D-galactose = beta-D-galactosyl-(1-&gt;4)-N-acetyl-D-glucosamine + UDP + H(+). The enzyme catalyses a beta-D-GlcNAc-(1-&gt;3)-beta-D-Gal-(1-&gt;4)-beta-D-Glc-(1&lt;-&gt;1)-Cer(d18:1(4E)) + UDP-alpha-D-galactose = a neolactoside nLc4Cer(d18:1(4E)) + UDP + H(+). It catalyses the reaction a beta-D-glucosylceramide + UDP-alpha-D-galactose = a beta-D-galactosyl-(1-&gt;4)-beta-D-glucosyl-(1&lt;-&gt;1)-ceramide + UDP + H(+). It carries out the reaction a neolactoside IV(3)-beta-GlcNAc-nLc4Cer + UDP-alpha-D-galactose = a neolactoside nLc6Cer + UDP + H(+). Its pathway is protein modification; protein glycosylation. Responsible for the synthesis of complex-type N-linked oligosaccharides in many glycoproteins as well as the carbohydrate moieties of glycolipids. This chain is Beta-1,4-galactosyltransferase 3, found in Mus musculus (Mouse).